The primary structure comprises 160 residues: Protein YpjC (160 aa).

The protein is Protein YpjC (ypjC) of Escherichia coli (strain K12).